A 180-amino-acid polypeptide reads, in one-letter code: NADH-quinone oxidoreductase subunit I (180 aa).

4Fe-4S ferredoxin-type domains are found at residues 48–80 and 90–119; these read IVLT…LQKA and EFFR…LTPD. Cys60, Cys63, Cys66, Cys70, Cys99, Cys102, Cys105, and Cys109 together coordinate [4Fe-4S] cluster.

The protein belongs to the complex I 23 kDa subunit family. NDH-1 is composed of 13 different subunits. Subunits NuoA, H, J, K, L, M, N constitute the membrane sector of the complex. [4Fe-4S] cluster is required as a cofactor.

The protein resides in the cell inner membrane. The enzyme catalyses a quinone + NADH + 5 H(+)(in) = a quinol + NAD(+) + 4 H(+)(out). NDH-1 shuttles electrons from NADH, via FMN and iron-sulfur (Fe-S) centers, to quinones in the respiratory chain. The immediate electron acceptor for the enzyme in this species is believed to be ubiquinone. Couples the redox reaction to proton translocation (for every two electrons transferred, four hydrogen ions are translocated across the cytoplasmic membrane), and thus conserves the redox energy in a proton gradient. The polypeptide is NADH-quinone oxidoreductase subunit I (Sodalis glossinidius (strain morsitans)).